The following is a 242-amino-acid chain: DNA repair protein RecO (242 aa).

The protein belongs to the RecO family. Monomer.

In terms of biological role, involved in DNA repair and RecF pathway recombination. The polypeptide is DNA repair protein RecO (Salmonella dublin (strain CT_02021853)).